The primary structure comprises 525 residues: D-aminopeptidase (525 aa).

Catalysis depends on serine 62, which acts as the Nucleophile. Lysine 65 acts as the Proton donor/acceptor in catalysis. Residues 485–495 (PRALDHTAPGD) form an important for specificity region. Aspartate 489 is a substrate binding site.

Belongs to the peptidase S12 family. As to quaternary structure, homodimer.

The catalysed reaction is Release of an N-terminal D-amino acid from a peptide, Xaa-|-Yaa-, in which Xaa is preferably D-Ala, D-Ser or D-Thr. D-amino acid amides and methyl esters also are hydrolyzed, as is glycine amide.. Its activity is regulated as follows. Inhibited by beta-lactam compounds such as 6-aminopenicillic acid, 7-aminocephalosporanic acid, benzylpenicillin and ampicillin. Inhibited by p-chloromercuribenzoate. In terms of biological role, hydrolyzes N-terminal residues in D-amino acid-containing peptides. This Gluconobacter oxydans (strain 621H) (Gluconobacter suboxydans) protein is D-aminopeptidase.